The primary structure comprises 269 residues: Putative pyruvate, phosphate dikinase regulatory protein (269 aa).

Residue 153 to 160 (GVSRTSKT) participates in ADP binding.

It belongs to the pyruvate, phosphate/water dikinase regulatory protein family. PDRP subfamily.

It catalyses the reaction N(tele)-phospho-L-histidyl/L-threonyl-[pyruvate, phosphate dikinase] + ADP = N(tele)-phospho-L-histidyl/O-phospho-L-threonyl-[pyruvate, phosphate dikinase] + AMP + H(+). The enzyme catalyses N(tele)-phospho-L-histidyl/O-phospho-L-threonyl-[pyruvate, phosphate dikinase] + phosphate + H(+) = N(tele)-phospho-L-histidyl/L-threonyl-[pyruvate, phosphate dikinase] + diphosphate. Its function is as follows. Bifunctional serine/threonine kinase and phosphorylase involved in the regulation of the pyruvate, phosphate dikinase (PPDK) by catalyzing its phosphorylation/dephosphorylation. The sequence is that of Putative pyruvate, phosphate dikinase regulatory protein from Pediococcus pentosaceus (strain ATCC 25745 / CCUG 21536 / LMG 10740 / 183-1w).